A 447-amino-acid polypeptide reads, in one-letter code: Dihydroorotase (447 aa).

H81 and H83 together coordinate Zn(2+). Residues 83–85 (HFR) and N115 contribute to the substrate site. D171, H198, and H252 together coordinate Zn(2+). N298 is a substrate binding site. D325 contacts Zn(2+). Residue D325 is part of the active site. Substrate-binding positions include H329 and 343–344 (FG).

The protein belongs to the metallo-dependent hydrolases superfamily. DHOase family. Class I DHOase subfamily. It depends on Zn(2+) as a cofactor.

It catalyses the reaction (S)-dihydroorotate + H2O = N-carbamoyl-L-aspartate + H(+). Its pathway is pyrimidine metabolism; UMP biosynthesis via de novo pathway; (S)-dihydroorotate from bicarbonate: step 3/3. Catalyzes the reversible cyclization of carbamoyl aspartate to dihydroorotate. The protein is Dihydroorotase of Ehrlichia chaffeensis (strain ATCC CRL-10679 / Arkansas).